The sequence spans 192 residues: Erythropoietin (192 aa).

An N-terminal signal peptide occupies residues 1–25; it reads MGARDCTPLLMLSFLLFPLGFPVLG. 2 cysteine pairs are disulfide-bonded: C32–C187 and C54–C58. N-linked (GlcNAc...) asparagine glycosylation is present at N49. N-linked (GlcNAc...) asparagine glycosylation is found at N63 and N108.

This sequence belongs to the EPO/TPO family. Produced by kidney or liver of adult mammals and by liver of fetal or neonatal mammals.

Its subcellular location is the secreted. Its function is as follows. Hormone involved in the regulation of erythrocyte proliferation and differentiation and the maintenance of a physiological level of circulating erythrocyte mass. Binds to EPOR leading to EPOR dimerization and JAK2 activation thereby activating specific downstream effectors, including STAT1 and STAT3. This is Erythropoietin (EPO) from Bos taurus (Bovine).